Here is a 500-residue protein sequence, read N- to C-terminus: MTIDLNVIQSDIISARRAPENSLFIDGKFVSPIEPAAKPIPLINPATEEIIGTCANASAKDVDSAVENAYNTFRSGIWAKWPGKQRGLVLRKIAKMMREKRELLAGIDTINCGKPTPYALFDIDSCADMFEYYAEVAETDNPTVKVPLPNNPGFCAFEKRFPRGVIGVITPWNFPLKMALWKLVPAIASGNCVVLKPSELAPWSCLEFALICKEAGLPDGVLNVIIGSGKESGAALSCHPKIAYLAFTGSLATGKKIMHAAAENIVPLTLELGGKSPLIICEDADLSLAIPSAAFAIFFNQGEACTAASRLIVHESVADEVLGGLVSEANKLIIGNGLDPQVTLGPVVSKTQFEKIVSYIQSAINEGCKCVVGGLPRSEQKGYFIPPTVFTNVQTHNKIWREEIFGPVLAVKTFHTNEEALELANDSEYGLGSGVFSTNPKTLEFFSNNIEAGMCSLNNYHVVTHELPWIGWKHSGLGVGLSKHGYNEYMRLKQITQYVG.

249 to 254 (GSLATG) is an NAD(+) binding site. Catalysis depends on Glu271, which acts as the Proton acceptor. The active-site Nucleophile is the Cys305.

This sequence belongs to the aldehyde dehydrogenase family.

It carries out the reaction betaine aldehyde + NAD(+) + H2O = glycine betaine + NADH + 2 H(+). It participates in amine and polyamine biosynthesis; betaine biosynthesis via choline pathway; betaine from betaine aldehyde: step 1/1. In Schizosaccharomyces pombe (strain 972 / ATCC 24843) (Fission yeast), this protein is Probable betaine aldehyde dehydrogenase (meu8).